Here is a 493-residue protein sequence, read N- to C-terminus: Ferruginol synthase 1 (493 aa).

A helical membrane pass occupies residues 2–22; the sequence is DSFPLLAALFFILAATWFISF. Heme is bound at residue Cys-437.

This sequence belongs to the cytochrome P450 family. Heme is required as a cofactor. In terms of tissue distribution, expressed in leaf glandular trichomes.

It localises to the membrane. The catalysed reaction is abieta-8,11,13-triene + reduced [NADPH--hemoprotein reductase] + O2 = ferruginol + oxidized [NADPH--hemoprotein reductase] + H2O + H(+). It carries out the reaction ferruginol + reduced [NADPH--hemoprotein reductase] + O2 = 11-hydroxyferruginol + oxidized [NADPH--hemoprotein reductase] + H2O + H(+). The enzyme catalyses miltiradiene + 2 reduced [NADPH--hemoprotein reductase] + 2 O2 = 11-oxomiltiradiene + 2 oxidized [NADPH--hemoprotein reductase] + 3 H2O + 2 H(+). The protein operates within secondary metabolite biosynthesis; terpenoid biosynthesis. Monooxygenase involved in the biosynthesis of labdane-related diterpenes natural products. Catalyzes the oxidation of abietatriene to produce ferruginol. Catalyzes the oxidation of ferruginol at C-12 to produce 11-hydroxyferruginol. Ferruginol and 11-hydroxyferruginol are intermediates in the biosynthesis of carnosate, a potent antioxidant. May also convert miltiradiene into 11-oxomiltiradiene. This Rosmarinus officinalis (Rosemary) protein is Ferruginol synthase 1.